A 591-amino-acid chain; its full sequence is Pentatricopeptide repeat-containing protein At3g47530 (591 aa).

9 PPR repeats span residues 76–110 (TLSHCNTMIRAFSLSQTPCEGFRLFRSLRRNSSLP), 112–146 (NPLSSSFALKCCIKSGDLLGGLQIHGKIFSDGFLS), 147–177 (DSLLMTTLMDLYSTCENSTDACKVFDEIPKR), 178–208 (DTVSWNVLFSCYLRNKRTRDVLVLFDKMKND), 216–250 (DGVTCLLALQACANLGALDFGKQVHDFIDENGLSG), 251–281 (ALNLSNTLVSMYSRCGSMDKAYQVFYGMRER), 282–316 (NVVSWTALISGLAMNGFGKEAIEAFNEMLKFGISP), 317–351 (EEQTLTGLLSACSHSGLVAEGMMFFDRMRSGEFKI), and 354–384 (NLHHYGCVVDLLGRARLLDKAYSLIKSMEMK). The segment at 389–464 (IWRTLLGACR…KPGCSAIELQ (76 aa)) is type E motif. A type E(+) motif region spans residues 465–495 (GTVHEFIVDDVSHPRKEEIYKMLAEINQQLK). The type DYW motif stretch occupies residues 496–591 (IAGYVAEITS…GGSCSCNDFW (96 aa)).

The protein belongs to the PPR family. PCMP-H subfamily.

This is Pentatricopeptide repeat-containing protein At3g47530 (PCMP-H76) from Arabidopsis thaliana (Mouse-ear cress).